Consider the following 198-residue polypeptide: Altered inheritance of mitochondria protein 34, mitochondrial (198 aa).

A mitochondrion-targeting transit peptide spans 1-55 (MSISLFGRIVSQQFSGIRAAGPGRSLYLPFTLLLKQPGAYKVSLHRYVHSTQTKS). Positions 69–103 (FQKFTVKVLKEQCKSRGLKLSGRKSDLLQRLITHD) constitute an SAP domain. Residues 172–187 (IFLLGFFMLSCLWWNL) traverse the membrane as a helical segment.

Belongs to the AIM34 family.

The protein resides in the mitochondrion membrane. The chain is Altered inheritance of mitochondria protein 34, mitochondrial (AIM34) from Saccharomyces cerevisiae (strain JAY291) (Baker's yeast).